We begin with the raw amino-acid sequence, 231 residues long: MLKKEESLMNIAKMIDHTLLKPNATKEEIKKVCEEAREYGFASVCINPCFVDLAYEMLKDTDVKVCTVVGFPLGANTIETKVVEAVEAVKKGATEIDMVLNISMLKSGEYDYVKKEIGEVVKAVKSHGDIVVKVILETCYLSDEEKIKACEISKEAGADFVKTSTGFGPGGATVEDVKLMRKVVGENFGVKASGGIRSYEDAKAMIEAGANRIGASAGVKIVEEWKKQGLG.

D97 (proton donor/acceptor) is an active-site residue. Catalysis depends on K162, which acts as the Schiff-base intermediate with acetaldehyde. K191 serves as the catalytic Proton donor/acceptor.

It belongs to the DeoC/FbaB aldolase family. DeoC type 1 subfamily.

Its subcellular location is the cytoplasm. The enzyme catalyses 2-deoxy-D-ribose 5-phosphate = D-glyceraldehyde 3-phosphate + acetaldehyde. It participates in carbohydrate degradation; 2-deoxy-D-ribose 1-phosphate degradation; D-glyceraldehyde 3-phosphate and acetaldehyde from 2-deoxy-alpha-D-ribose 1-phosphate: step 2/2. Functionally, catalyzes a reversible aldol reaction between acetaldehyde and D-glyceraldehyde 3-phosphate to generate 2-deoxy-D-ribose 5-phosphate. The polypeptide is Deoxyribose-phosphate aldolase (Caldanaerobacter subterraneus subsp. tengcongensis (strain DSM 15242 / JCM 11007 / NBRC 100824 / MB4) (Thermoanaerobacter tengcongensis)).